The sequence spans 257 residues: MLILVSPAKTLDFEQPPLTQVYSQPDFLTHSQELIQVCRQLTPSDIATLMKVSDKIAGLNAARFGQWQPDFSLDNAKQAIFAFRGDVYTGFDADTLSEDEIAQTQSQLRILSGLYGLLRPLDLIMPYRLEMGTALSNPKGKNLYEFWGDTLTQAVNEALAESGSDIIVNLASNEYFKAIKPKKLQGQLISPVFKDCKNGQYKVISFFAKRARGMMARYIITNKVNTLAELRAFNLAGYYYSEEQSSPTNPTFLRAEQ.

The protein belongs to the UPF0246 family.

The chain is UPF0246 protein Sbal195_1149 from Shewanella baltica (strain OS195).